The following is a 169-amino-acid chain: Heat shock protein beta-7 (169 aa).

The interval 1–37 (MSHRTSSAFRAERSFRSSSSSSSSSSSSASRALPAQD) is disordered. The interval 1 to 70 (MSHRTSSAFR…PLAFPARPGG (70 aa)) is required for localization to SC35 splicing speckles. Positions 16-32 (RSSSSSSSSSSSSASRA) are enriched in low complexity. A sHSP domain is found at 61-169 (PLAFPARPGG…QQTFRTEIKI (109 aa)).

This sequence belongs to the small heat shock protein (HSP20) family. As to quaternary structure, interacts with C-terminal domain of actin-binding protein 280. As to expression, found in both cardiac and slow skeletal (soleus) muscle.

The protein resides in the cytoplasm. It localises to the nucleus. It is found in the cajal body. The polypeptide is Heat shock protein beta-7 (Hspb7) (Mus musculus (Mouse)).